The following is a 215-amino-acid chain: MGRRPARCYRYCKNKPYPKSRFCRGVPDPKIRIFDLGRKKAKVDEFPLCAHMVSDEYEQLSSEALEAARICANKYMVKTCGKDGFHIRVRLHPFHVIRINKMLSCAGADRLQTGMRGAFGKPQGTVARVHIGQVIMSVRTKAQNKEHVIEALRRAKFKFPGRQKIHVSKKYGFTKFNTCDFDNMLAEKRLIPDGCGVKYIPSRGPLSRWKALHAN.

It belongs to the universal ribosomal protein uL16 family. In terms of assembly, component of the large ribosomal subunit.

It localises to the cytoplasm. In terms of biological role, component of the large ribosomal subunit. Plays a role in the formation of actively translating ribosomes. Plays a role in the embryonic brain development. The protein is Large ribosomal subunit protein uL16 of Danio rerio (Zebrafish).